The chain runs to 446 residues: MNAQEANFDGLVGPTHNYAGLSFGNVASLNNEKSAANPKAAAKQGLRKMKQLADLGFAQGVLPPQERPSLRLLRELGFSGKDADVIAKAAKQAPELLAAASSASAMWTANAATVSPSADTSDGRVHFTPANLCSKLHRAIEHEATRRTLSTLFADPAHFAVHEALTGTPALGDEGAANHTRFCAEYGKPGIEFFVYGRAEYRRGPEPKRFPARQTFEASRAVAHRHGLAEEATVYAQQDPDVIDAGVFHNDVISVGNRDTLFTHERAFVNKQAIYDTLTAALDARGARLNVIEVPEAAVSVNDAVTSYLFNSQLLSRADGSQVLVVPQECRENGNVAAYLDELAAGNGPIHDVLVFDLRESMKNGGGPACLRLRVVLNEAERAAVTSNVWINDTLFTSLDTWIDRHYRDRLAPEDLADPALLEESRTALDELTQILRVGSLYDFQR.

Residues 19 to 28 (AGLSFGNVAS), Asn-110, and 137 to 138 (HR) each bind substrate. Residue Glu-174 is part of the active site. Arg-213 is a substrate binding site. His-249 is a catalytic residue. Substrate-binding residues include Asp-251 and Asn-364. Cys-370 (nucleophile) is an active-site residue.

Belongs to the succinylarginine dihydrolase family. As to quaternary structure, homodimer.

It catalyses the reaction N(2)-succinyl-L-arginine + 2 H2O + 2 H(+) = N(2)-succinyl-L-ornithine + 2 NH4(+) + CO2. It participates in amino-acid degradation; L-arginine degradation via AST pathway; L-glutamate and succinate from L-arginine: step 2/5. Catalyzes the hydrolysis of N(2)-succinylarginine into N(2)-succinylornithine, ammonia and CO(2). The polypeptide is N-succinylarginine dihydrolase (Burkholderia lata (strain ATCC 17760 / DSM 23089 / LMG 22485 / NCIMB 9086 / R18194 / 383)).